Here is a 366-residue protein sequence, read N- to C-terminus: Growth/differentiation factor 3 (366 aa).

The N-terminal stretch at 1–22 is a signal peptide; it reads MQPYQRLLALGFLLLTLPWGQT. A propeptide spanning residues 23-252 is cleaved from the precursor; sequence SEFQDSDLLQ…HCHPSSRKRR (230 aa). N-linked (GlcNAc...) asparagine glycans are attached at residues Asn-113 and Asn-308. 3 disulfides stabilise this stretch: Cys-266/Cys-331, Cys-295/Cys-363, and Cys-299/Cys-365.

This sequence belongs to the TGF-beta family. As to quaternary structure, homodimer. Heterodimer (Potential). But, in contrast to other members of this family, cannot be disulfide-linked. In terms of processing, synthesized as large precursor molecule that undergo proteolytic cleavage, releasing the pro-domain from the active, receptor binding, C-terminal region of the molecule. In terms of tissue distribution, primarily in adult bone marrow, spleen, thymus and adipose tissue.

It localises to the secreted. Its subcellular location is the cytoplasm. Its function is as follows. Growth factor involved in early embryonic development and adipose-tissue homeostasis. During embryogenesis controls formation of anterior visceral endoderm and mesoderm and the establishment of anterior-posterior identity through a receptor complex comprising the receptor ACVR1B and the coreceptor CRIPTO. Regulates adipose-tissue homeostasis and energy balance under nutrient overload in part by signaling through the receptor complex based on ACVR1C and CRIPTO. This is Growth/differentiation factor 3 (Gdf3) from Mus musculus (Mouse).